The primary structure comprises 631 residues: Methanol dehydrogenase [cytochrome c] subunit 1 (631 aa).

The signal sequence occupies residues 1–32 (MNRNTPKARGASSLAMAVAMGLAVLTTAPATA). A disulfide bond links Cys-135 and Cys-136. Residues Glu-209 and Asn-293 each contribute to the Ca(2+) site. Asp-335 serves as the catalytic Proton acceptor. A disulfide bridge links Cys-418 with Cys-447.

The protein belongs to the bacterial PQQ dehydrogenase family. As to quaternary structure, heterotetramer composed of 2 alpha and 2 beta subunits. Pyrroloquinoline quinone serves as cofactor. Requires Ca(2+) as cofactor.

It is found in the periplasm. It carries out the reaction 2 Fe(III)-[cytochrome cL] + a primary alcohol = 2 Fe(II)-[cytochrome cL] + an aldehyde + 2 H(+). In terms of biological role, catalyzes the oxidation of primary alcohols including methanol. In Paracoccus denitrificans, this protein is Methanol dehydrogenase [cytochrome c] subunit 1 (moxF).